The chain runs to 347 residues: Protein YIPF3 (347 aa).

Positions 1–28 are disordered; sequence MATQAAPASGVRNGAGPEWGGFEENIQG. Ala2 carries the N-acetylalanine modification. The Cytoplasmic portion of the chain corresponds to 2–145; it reads ATQAAPASGV…PIKMVNFPQK (144 aa). The chain crosses the membrane as a helical span at residues 146–166; that stretch reads VAGELYGPLMLVFTLVAILLH. Residues 167–184 lie on the Lumenal side of the membrane; that stretch reads GMKTSDTIIREGTLMGTA. A helical transmembrane segment spans residues 185–205; the sequence is IGTCFGYWLGVSSFIYFLAYL. Topologically, residues 206-211 are cytoplasmic; that stretch reads CNAQIT. Residues 212–234 traverse the membrane as a helical segment; the sequence is MLQMLALLGYGLFGHCIVLFITY. Residues 235 to 237 are Lumenal-facing; that stretch reads NIH. The helical transmembrane segment at 238-260 threads the bilayer; sequence LHALFYLFWLLLGGLSTLRMVAV. Residues 261 to 271 are Cytoplasmic-facing; the sequence is LVSRTVGPTQR. The helical transmembrane segment at 272–292 threads the bilayer; that stretch reads LLLCGTLAALHMLFLLYLHFA. At 293 to 347 the chain is on the lumenal side; the sequence is YHKVVEGILDTLEGPNIPPMQRVPRDIPAVLPAAKLPVAVVNATAKAIAVTLQSH. Residue Asn334 is glycosylated (N-linked (GlcNAc...) asparagine).

The protein belongs to the YIP1 family. As to quaternary structure, interacts with YIPF4 and YIPF5.

The protein localises to the cell membrane. It is found in the golgi apparatus. Its subcellular location is the cis-Golgi network membrane. It localises to the cytoplasm. In terms of biological role, involved in the maintenance of the Golgi structure. May play a role in hematopoiesis. This Rattus norvegicus (Rat) protein is Protein YIPF3 (Yipf3).